A 171-amino-acid polypeptide reads, in one-letter code: Shikimate kinase (171 aa).

Position 11–16 (11–16 (GTGKTT)) interacts with ATP. Threonine 15 contributes to the Mg(2+) binding site. Positions 33, 57, and 79 each coordinate substrate. Arginine 117 serves as a coordination point for ATP. Arginine 136 is a binding site for substrate.

This sequence belongs to the shikimate kinase family. Monomer. Mg(2+) serves as cofactor.

It localises to the cytoplasm. The catalysed reaction is shikimate + ATP = 3-phosphoshikimate + ADP + H(+). Its pathway is metabolic intermediate biosynthesis; chorismate biosynthesis; chorismate from D-erythrose 4-phosphate and phosphoenolpyruvate: step 5/7. Catalyzes the specific phosphorylation of the 3-hydroxyl group of shikimic acid using ATP as a cosubstrate. This Caldanaerobacter subterraneus subsp. tengcongensis (strain DSM 15242 / JCM 11007 / NBRC 100824 / MB4) (Thermoanaerobacter tengcongensis) protein is Shikimate kinase.